The chain runs to 199 residues: Recombination protein RecR (199 aa).

A C4-type zinc finger spans residues 57 to 72 (CQSCRTYTEETLCPIC). Positions 81-176 (STICVVETPA…MISRIAHGVP (96 aa)) constitute a Toprim domain.

This sequence belongs to the RecR family.

In terms of biological role, may play a role in DNA repair. It seems to be involved in an RecBC-independent recombinational process of DNA repair. It may act with RecF and RecO. The chain is Recombination protein RecR from Shewanella baltica (strain OS195).